The primary structure comprises 737 residues: Zinc finger protein 585A (737 aa).

In terms of domain architecture, KRAB spans Met1–Pro65. C2H2-type zinc fingers lie at residues Tyr126–His148, Phe154–His176, Tyr182–His204, His210–His232, Tyr238–His260, and Tyr266–His288. The C2H2-type 7; degenerate zinc finger occupies Tyr294–Gln316. 15 C2H2-type zinc fingers span residues Ser322 to His344, Tyr350 to His372, Tyr378 to His400, Tyr406 to His428, Tyr434 to His456, Tyr462 to His484, Tyr490 to His512, Tyr518 to His540, Tyr546 to His568, Tyr574 to His596, Tyr602 to His624, Tyr630 to His652, Tyr658 to His680, Tyr686 to His708, and Tyr714 to His736.

This sequence belongs to the krueppel C2H2-type zinc-finger protein family.

It is found in the nucleus. Functionally, may be involved in transcriptional regulation. This Pongo abelii (Sumatran orangutan) protein is Zinc finger protein 585A (ZNF585A).